Consider the following 453-residue polypeptide: 13-hydroxylupanine O-tigloyltransferase (453 aa).

Catalysis depends on proton acceptor residues His166 and Asp385.

Belongs to the plant acyltransferase family. As to quaternary structure, monomer. Expressed in roots and hypocotyls. Detected in seeds, leaves and cotyledons, but not in young developing leaves.

The catalysed reaction is 13-hydroxylupanine + (2E)-2-methylbut-2-enoyl-CoA = 13-(2-methylcrotonoyloxy)lupanine + CoA. Its activity is regulated as follows. Inhibited by N-ethylmaleimide, p-chloromercuribenzoic acid and diethylpyrocarbonate (DEPC). Its function is as follows. Acyl-CoA-dependent acyltransferase involved in the synthesis of lupanine alkaloids. Can use both (-)-13alpha-hydroxymultiflorine and (+)-13alpha-hydroxylupanine as substrates. Lower activity with (-)-3beta, 13alpha-dihydroxylupanine, but no activity with (+)-epilupinine and (-)-lupinine as substrates. Tigloyl-CoA, benzoyl-CoA and, more slowly, acetyl-CoA, propionyl-CoA and 2-butenoyl-CoA can act as acyl donors. This chain is 13-hydroxylupanine O-tigloyltransferase (HMT/HLT), found in Lupinus albus (White lupine).